A 236-amino-acid polypeptide reads, in one-letter code: MEKREELYRGKAKSVYKTDDADRLILLFRNDTSAFDGKRIEQLDRKGMVNNKFNAFIMQKLEEAGIPTQFDKLLGDNECLVKKLDMIPVECVVRNYAAGSLVKRLGIEEGTRLNPYTFELFLKDDAKGDPFINESHVVAFGWGTAEQLARMKELSIKVNDVLTKLFDDAGLLLVDFKLEFGVFHGEIVLGDEFSPDGCRLWDKDTRKKMDKDRFRQGLGDVIEAYEEVANRLGVPL.

The protein belongs to the SAICAR synthetase family.

It catalyses the reaction 5-amino-1-(5-phospho-D-ribosyl)imidazole-4-carboxylate + L-aspartate + ATP = (2S)-2-[5-amino-1-(5-phospho-beta-D-ribosyl)imidazole-4-carboxamido]succinate + ADP + phosphate + 2 H(+). The protein operates within purine metabolism; IMP biosynthesis via de novo pathway; 5-amino-1-(5-phospho-D-ribosyl)imidazole-4-carboxamide from 5-amino-1-(5-phospho-D-ribosyl)imidazole-4-carboxylate: step 1/2. The polypeptide is Phosphoribosylaminoimidazole-succinocarboxamide synthase (Pseudomonas syringae pv. syringae (strain B728a)).